Reading from the N-terminus, the 366-residue chain is Beta sliding clamp (366 aa).

Belongs to the beta sliding clamp family. In terms of assembly, forms a ring-shaped head-to-tail homodimer around DNA which binds and tethers DNA polymerases and other proteins to the DNA. The DNA replisome complex has a single clamp-loading complex (3 tau and 1 each of delta, delta', psi and chi subunits) which binds 3 Pol III cores (1 core on the leading strand and 2 on the lagging strand) each with a beta sliding clamp dimer. Additional proteins in the replisome are other copies of gamma, psi and chi, Ssb, DNA helicase and RNA primase.

It localises to the cytoplasm. Confers DNA tethering and processivity to DNA polymerases and other proteins. Acts as a clamp, forming a ring around DNA (a reaction catalyzed by the clamp-loading complex) which diffuses in an ATP-independent manner freely and bidirectionally along dsDNA. Initially characterized for its ability to contact the catalytic subunit of DNA polymerase III (Pol III), a complex, multichain enzyme responsible for most of the replicative synthesis in bacteria; Pol III exhibits 3'-5' exonuclease proofreading activity. The beta chain is required for initiation of replication as well as for processivity of DNA replication. This chain is Beta sliding clamp (dnaN), found in Haemophilus influenzae (strain ATCC 51907 / DSM 11121 / KW20 / Rd).